Reading from the N-terminus, the 276-residue chain is Expansin-like A3 (276 aa).

Positions 1–28 (MAVLLSILSSSFLLLLAASSSSTPRASA) are cleaved as a signal peptide. The Expansin-like EG45 domain occupies 52 to 158 (GGGCGYGAMA…RRIPCDYKDK (107 aa)). N-linked (GlcNAc...) asparagine glycosylation is found at N115 and N159. One can recognise an Expansin-like CBD domain in the interval 172–255 (NNLVIKFLYQ…NWQPGQVYDT (84 aa)).

The protein belongs to the expansin family. Expansin-like A subfamily.

It localises to the secreted. The sequence is that of Expansin-like A3 (EXLA3) from Oryza sativa subsp. japonica (Rice).